Reading from the N-terminus, the 649-residue chain is ABC transporter G family member 5 (649 aa).

Residues 42-284 (VKTEEESLKL…LRSNGLHPPL (243 aa)) form the ABC transporter domain. Position 80-87 (80-87 (GPSGAGKS)) interacts with ATP. Positions 308-336 (SRRAAHVLTPQTTLQEKRSEDSQGESKSG) are disordered. Residues 371–581 (EETMILTHRF…PFEGFLINEF (211 aa)) enclose the ABC transmembrane type-2 domain. Transmembrane regions (helical) follow at residues 390 to 410 (LFAC…LIFH), 425 to 445 (LFAF…PIFL), 474 to 494 (LPFL…LVGL), 506 to 526 (LLIW…SALV), 529 to 549 (FIVG…FSGY), and 617 to 637 (VVIM…ILRC).

Belongs to the ABC transporter superfamily. ABCG family. Eye pigment precursor importer (TC 3.A.1.204) subfamily.

It localises to the membrane. This is ABC transporter G family member 5 (ABCG5) from Arabidopsis thaliana (Mouse-ear cress).